We begin with the raw amino-acid sequence, 94 residues long: Adaptation to cold protein J (94 aa).

The 91-residue stretch at 3–93 (NHFSVLGIKP…AMRELWDQFY (91 aa)) folds into the J domain. Positions 74–94 (NNVIVTDPNSAMRELWDQFYP) are essential for interaction with AtcC.

In terms of assembly, interacts via its C-terminal extension with AtcC. Does not interact with AtcA and AtcB.

Its function is as follows. Involved in cold adaptation. The J-domain is functional and can stimulate the ATPase activity of the DnaK chaperone. May work as a co-chaperone of the DnaK system to support cold resistance. The chain is Adaptation to cold protein J from Shewanella oneidensis (strain ATCC 700550 / JCM 31522 / CIP 106686 / LMG 19005 / NCIMB 14063 / MR-1).